A 76-amino-acid chain; its full sequence is Small ribosomal subunit protein bS18 (76 aa).

It belongs to the bacterial ribosomal protein bS18 family. As to quaternary structure, part of the 30S ribosomal subunit. Forms a tight heterodimer with protein bS6.

Functionally, binds as a heterodimer with protein bS6 to the central domain of the 16S rRNA, where it helps stabilize the platform of the 30S subunit. This is Small ribosomal subunit protein bS18 from Nitrosomonas eutropha (strain DSM 101675 / C91 / Nm57).